Consider the following 1487-residue polypeptide: Collagen alpha-1(II) chain (1487 aa).

The first 25 residues, 1-25 (MIRLGAPQTLVLLTLLVAAVLRCQG), serve as a signal peptide directing secretion. The propeptide at 26 to 181 (QDVQEAGSCV…PPGLGGNFAA (156 aa)) is N-terminal propeptide. One can recognise a VWFC domain in the interval 32–90 (GSCVQDGQRYNDKDVWKPEPCRICVCDTGTVLCDDIICEDVKDCLSPEIPFGECCPICP). A disordered region spans residues 97-1237 (SGQPGPKGQK…PREKGPDPLQ (1141 aa)). Composition is skewed to basic and acidic residues over residues 105-116 (QKGEPGDIKDIV) and 133-154 (PRGDRGDKGEKGAPGPRGRDGE). Residues 158-173 (PGNPGPPGPPGPPGPP) are compositionally biased toward pro residues. A 5-hydroxylysine modification is found at lysine 190. Lysine 190 carries an O-linked (Gal...) hydroxylysine glycan. The triple-helical region stretch occupies residues 201 to 1214 (GPMGPMGPRG…PGPPGPPGPP (1014 aa)). The segment covering 208 to 217 (PRGPPGPAGA) has biased composition (pro residues). Residues 218 to 239 (PGPQGFQGNPGEPGEPGVSGPM) are compositionally biased toward low complexity. Pro residues predominate over residues 241 to 250 (PRGPPGPPGK). Basic and acidic residues predominate over residues 251 to 265 (PGDDGEAGKPGKAGE). A 5-hydroxylysine mark is found at lysine 287, lysine 299, and lysine 308. O-linked (Gal...) hydroxylysine glycans are attached at residues lysine 287, lysine 299, and lysine 308. Composition is skewed to low complexity over residues 310 to 320 (ESGSPGENGSP) and 335 to 350 (TGPAGAAGARGNDGQP). The segment covering 360–369 (GPAGGPGFPG) has biased composition (gly residues). Composition is skewed to low complexity over residues 370–382 (APGAKGEAGPTGA) and 391–431 (PRGE…AGAP). Lysine 374 carries the post-translational modification 5-hydroxylysine. An O-linked (Gal...) hydroxylysine glycan is attached at lysine 374. A compositionally biased stretch (pro residues) spans 433-442 (FPGPRGPPGP). 5-hydroxylysine occurs at positions 608 and 620. Residues lysine 608 and lysine 620 are each glycosylated (O-linked (Gal...) hydroxylysine). Low complexity-rich tracts occupy residues 622-631 (LPGAPGLRGL) and 656-667 (QGAPGPSGFQGL). 4-hydroxyproline occurs at positions 659 and 668. 3-hydroxyproline is present on proline 670. A 4-hydroxyproline mark is found at proline 671 and proline 674. Residues 764-775 (KGDRGDVGEKGP) show a composition bias toward basic and acidic residues. 2 stretches are compositionally biased toward low complexity: residues 833-848 (AGFAGPPGADGQPGAK) and 877-913 (PTGVTGPKGARGAQGPPGATGFPGAAGRVGPPGSNGN). Proline 907 bears the 3-hydroxyproline mark. 3 positions are modified to 4-hydroxyproline: proline 908, proline 914, and proline 920. Pro residues predominate over residues 1069-1079 (APGPPGSPGPA). Over residues 1115-1129 (RGDKGEAGEPGERGL) the composition is skewed to basic and acidic residues. Lysine 1130 is modified (5-hydroxylysine). A glycan (O-linked (Gal...) hydroxylysine) is linked at lysine 1130. Proline 1144 bears the 3-hydroxyproline mark. Residues 1148–1157 (SGDQGASGPA) are compositionally biased toward low complexity. 4-hydroxyproline is present on proline 1181. Proline 1186 bears the 3-hydroxyproline mark. Position 1187 is a 4-hydroxyproline (proline 1187). A compositionally biased stretch (pro residues) spans 1199-1216 (AGPPGNPGPPGPPGPPGP). Proline 1201 is modified (3-hydroxyproline). Residues proline 1202 and proline 1205 each carry the 4-hydroxyproline modification. The residue at position 1207 (proline 1207) is a 3-hydroxyproline. A 4-hydroxyproline mark is found at proline 1208 and proline 1211. Residue proline 1213 is modified to 3-hydroxyproline. A 4-hydroxyproline modification is found at proline 1214. The segment at 1215–1241 (GPGIDMSAFAGLGPREKGPDPLQYMRA) is nonhelical region (C-terminal). The Fibrillar collagen NC1 domain occupies 1253–1487 (AEVDATLKSL…GVDIGPVCFL (235 aa)). Disulfide bonds link cysteine 1283–cysteine 1315, cysteine 1323–cysteine 1485, and cysteine 1393–cysteine 1438. Ca(2+) contacts are provided by aspartate 1301, asparagine 1303, glutamine 1304, cysteine 1306, and aspartate 1309. N-linked (GlcNAc...) asparagine glycosylation occurs at asparagine 1388.

It belongs to the fibrillar collagen family. As to quaternary structure, homotrimers of alpha 1(II) chains. Post-translationally, the N-telopeptide is covalently linked to the helical COL2 region of alpha 1(IX), alpha 2(IX) and alpha 3(IX) chain. The C-telopeptide is covalently linked to an another site in the helical region of alpha 3(IX) COL2. In terms of processing, contains mostly 4-hydroxyproline. Prolines at the third position of the tripeptide repeating unit (G-X-P) are 4-hydroxylated in some or all of the chains. Contains 3-hydroxyproline at a few sites. This modification occurs on the first proline residue in the sequence motif Gly-Pro-Hyp, where Hyp is 4-hydroxyproline. Post-translationally, lysine residues at the third position of the tripeptide repeating unit (G-X-Y) are 5-hydroxylated in some or all of the chains. In terms of processing, O-glycosylated on hydroxylated lysine residues. The O-linked glycan consists of a Glc-Gal disaccharide. In terms of tissue distribution, isoform 2 is highly expressed in juvenile chondrocyte and low in fetal chondrocyte.

It is found in the secreted. The protein resides in the extracellular space. The protein localises to the extracellular matrix. In terms of biological role, type II collagen is specific for cartilaginous tissues. It is essential for the normal embryonic development of the skeleton, for linear growth and for the ability of cartilage to resist compressive forces. The protein is Collagen alpha-1(II) chain of Homo sapiens (Human).